A 622-amino-acid chain; its full sequence is Polygalacturonase 1 beta-like protein 1 (622 aa).

Residues 1–21 form the signal peptide; that stretch reads MRKQFVFLLPFLSRLYHVVIA. One copy of the FXXY 1 repeat lies at 118–121; it reads FSVY. N-linked (GlcNAc...) asparagine glycosylation is present at Asn-125. 11 FXXY repeats span residues 126–129, 140–143, 154–157, 168–171, 182–185, 196–199, 210–213, 224–227, 239–242, 253–256, and 267–270; these read FTNY, FKKY, FRRY, FTGY, FNSY, FKNY, FKAY, FKTY, FTSY, FSSY, and FSNY. Asn-278 is a glycosylation site (N-linked (GlcNAc...) asparagine). 7 FXXY repeats span residues 281–284, 295–298, 309–312, 323–326, 337–340, 351–354, and 365–368; these read FKGY, FKSY, FLNY, FSSY, FVNY, FSGY, and FKTY. N-linked (GlcNAc...) asparagine glycosylation is present at Asn-371. FXXY repeat units follow at residues 374 to 377 and 384 to 387; these read FKDY and FAKY. 2 N-linked (GlcNAc...) asparagine glycosylation sites follow: Asn-388 and Asn-461. In terms of domain architecture, BURP spans 407 to 621; sequence FFRESMLKEG…FENDMNWAIA (215 aa).

Expressed in flowers and stems.

The protein resides in the secreted. It localises to the extracellular space. Its subcellular location is the apoplast. It is found in the cell wall. Functionally, involved in cell size determination. This chain is Polygalacturonase 1 beta-like protein 1, found in Arabidopsis thaliana (Mouse-ear cress).